Here is a 140-residue protein sequence, read N- to C-terminus: Small ribosomal subunit protein uS12 (140 aa).

The disordered stretch occupies residues 33–55; that stretch reads KEQTNVSSPQKRGVCTRVGTMTP.

This sequence belongs to the universal ribosomal protein uS12 family. Part of the 30S ribosomal subunit. Contacts proteins S8 and S17. May interact with IF1 in the 30S initiation complex.

Its function is as follows. With S4 and S5 plays an important role in translational accuracy. Interacts with and stabilizes bases of the 16S rRNA that are involved in tRNA selection in the A site and with the mRNA backbone. Located at the interface of the 30S and 50S subunits, it traverses the body of the 30S subunit contacting proteins on the other side and probably holding the rRNA structure together. The combined cluster of proteins S8, S12 and S17 appears to hold together the shoulder and platform of the 30S subunit. In Geobacillus kaustophilus (strain HTA426), this protein is Small ribosomal subunit protein uS12.